The primary structure comprises 396 residues: Argininosuccinate synthase (396 aa).

ATP contacts are provided by residues 10–18 (AYSGGLDTS) and alanine 37. L-citrulline contacts are provided by tyrosine 88 and serine 93. Position 118 (glycine 118) interacts with ATP. Positions 120, 124, and 125 each coordinate L-aspartate. Asparagine 124 contacts L-citrulline. L-citrulline contacts are provided by arginine 128, serine 176, serine 185, glutamate 261, and tyrosine 273.

Belongs to the argininosuccinate synthase family. Type 1 subfamily. Homotetramer.

The protein localises to the cytoplasm. The catalysed reaction is L-citrulline + L-aspartate + ATP = 2-(N(omega)-L-arginino)succinate + AMP + diphosphate + H(+). It functions in the pathway amino-acid biosynthesis; L-arginine biosynthesis; L-arginine from L-ornithine and carbamoyl phosphate: step 2/3. The polypeptide is Argininosuccinate synthase (Nitratidesulfovibrio vulgaris (strain DP4) (Desulfovibrio vulgaris)).